Reading from the N-terminus, the 334-residue chain is Trans-1,2-dihydrobenzene-1,2-diol dehydrogenase (334 aa).

This sequence belongs to the Gfo/Idh/MocA family. Homodimer. In terms of tissue distribution, kidney.

It catalyses the reaction (1R,2R)-1,2-dihydrobenzene-1,2-diol + NADP(+) = catechol + NADPH + H(+). The catalysed reaction is D-xylose + NADP(+) = D-xylono-1,5-lactone + NADPH + H(+). This is Trans-1,2-dihydrobenzene-1,2-diol dehydrogenase (DHDH) from Macaca fascicularis (Crab-eating macaque).